A 198-amino-acid chain; its full sequence is Elongation factor Ts (198 aa).

The tract at residues 81-84 is involved in Mg(2+) ion dislocation from EF-Tu; the sequence is TDFV.

It belongs to the EF-Ts family.

Its subcellular location is the cytoplasm. Functionally, associates with the EF-Tu.GDP complex and induces the exchange of GDP to GTP. It remains bound to the aminoacyl-tRNA.EF-Tu.GTP complex up to the GTP hydrolysis stage on the ribosome. This chain is Elongation factor Ts, found in Herpetosiphon aurantiacus (strain ATCC 23779 / DSM 785 / 114-95).